The primary structure comprises 204 residues: uncharacterized protein (204 aa).

Residues 1–16 form the signal peptide; the sequence is MKYTFLAVLSAVTVLA.

The protein resides in the secreted. This is an uncharacterized protein from Arthroderma benhamiae (strain ATCC MYA-4681 / CBS 112371) (Trichophyton mentagrophytes).